A 184-amino-acid polypeptide reads, in one-letter code: Holliday junction branch migration complex subunit RuvA (184 aa).

The domain I stretch occupies residues 1–61 (MIAALRGNIF…ENEYTLYGFA (61 aa)). The tract at residues 62-135 (DKNEKKLFDS…GEFEVVFEEQ (74 aa)) is domain II. Residue Gln135 is a region of interest, flexible linker. The interval 135–184 (QNPVFNQALSALESLGFNKNDIVKALNGIKSDNLEETIKLALKKLSKDIK) is domain III.

Belongs to the RuvA family. Homotetramer. Forms an RuvA(8)-RuvB(12)-Holliday junction (HJ) complex. HJ DNA is sandwiched between 2 RuvA tetramers; dsDNA enters through RuvA and exits via RuvB. An RuvB hexamer assembles on each DNA strand where it exits the tetramer. Each RuvB hexamer is contacted by two RuvA subunits (via domain III) on 2 adjacent RuvB subunits; this complex drives branch migration. In the full resolvosome a probable DNA-RuvA(4)-RuvB(12)-RuvC(2) complex forms which resolves the HJ.

The protein localises to the cytoplasm. The RuvA-RuvB-RuvC complex processes Holliday junction (HJ) DNA during genetic recombination and DNA repair, while the RuvA-RuvB complex plays an important role in the rescue of blocked DNA replication forks via replication fork reversal (RFR). RuvA specifically binds to HJ cruciform DNA, conferring on it an open structure. The RuvB hexamer acts as an ATP-dependent pump, pulling dsDNA into and through the RuvAB complex. HJ branch migration allows RuvC to scan DNA until it finds its consensus sequence, where it cleaves and resolves the cruciform DNA. This chain is Holliday junction branch migration complex subunit RuvA, found in Nautilia profundicola (strain ATCC BAA-1463 / DSM 18972 / AmH).